The following is a 192-amino-acid chain: Fe/S biogenesis protein NfuA (192 aa).

The [4Fe-4S] cluster site is built by Cys-149 and Cys-152.

This sequence belongs to the NfuA family. In terms of assembly, homodimer. The cofactor is [4Fe-4S] cluster.

Involved in iron-sulfur cluster biogenesis. Binds a 4Fe-4S cluster, can transfer this cluster to apoproteins, and thereby intervenes in the maturation of Fe/S proteins. Could also act as a scaffold/chaperone for damaged Fe/S proteins. The protein is Fe/S biogenesis protein NfuA of Shewanella sp. (strain ANA-3).